A 265-amino-acid chain; its full sequence is TATA-box-binding protein (265 aa).

The interval 1-40 is disordered; the sequence is MYNPSQAVPVSLHKNQDNQDGGQQRSHYPQISSQQSQSYL. Positions 18-29 are enriched in polar residues; the sequence is NQDGGQQRSHYP. A run of 2 repeats spans residues 91–167 and 181–258.

It belongs to the TBP family. As to quaternary structure, belongs to the TFIID complex together with the TBP-associated factors (TAFs). Binds DNA as monomer.

It localises to the nucleus. In terms of biological role, general transcription factor that functions at the core of the DNA-binding multiprotein factor TFIID. Binding of TFIID to the TATA box is the initial transcriptional step of the pre-initiation complex (PIC), playing a role in the activation of eukaryotic genes transcribed by RNA polymerase II. This Strongylocentrotus purpuratus (Purple sea urchin) protein is TATA-box-binding protein.